A 560-amino-acid chain; its full sequence is Dihydroxy-acid dehydratase (560 aa).

Cys52 provides a ligand contact to [2Fe-2S] cluster. Mg(2+) is bound at residue Asp84. Cys125 provides a ligand contact to [2Fe-2S] cluster. The Mg(2+) site is built by Asp126 and Lys127. Position 127 is an N6-carboxylysine (Lys127). Cys197 contributes to the [2Fe-2S] cluster binding site. Glu448 is a binding site for Mg(2+). Ser474 (proton acceptor) is an active-site residue.

This sequence belongs to the IlvD/Edd family. As to quaternary structure, homodimer. Requires [2Fe-2S] cluster as cofactor. The cofactor is Mg(2+).

It catalyses the reaction (2R)-2,3-dihydroxy-3-methylbutanoate = 3-methyl-2-oxobutanoate + H2O. The enzyme catalyses (2R,3R)-2,3-dihydroxy-3-methylpentanoate = (S)-3-methyl-2-oxopentanoate + H2O. Its pathway is amino-acid biosynthesis; L-isoleucine biosynthesis; L-isoleucine from 2-oxobutanoate: step 3/4. It functions in the pathway amino-acid biosynthesis; L-valine biosynthesis; L-valine from pyruvate: step 3/4. Functionally, functions in the biosynthesis of branched-chain amino acids. Catalyzes the dehydration of (2R,3R)-2,3-dihydroxy-3-methylpentanoate (2,3-dihydroxy-3-methylvalerate) into 2-oxo-3-methylpentanoate (2-oxo-3-methylvalerate) and of (2R)-2,3-dihydroxy-3-methylbutanoate (2,3-dihydroxyisovalerate) into 2-oxo-3-methylbutanoate (2-oxoisovalerate), the penultimate precursor to L-isoleucine and L-valine, respectively. This chain is Dihydroxy-acid dehydratase, found in Francisella tularensis subsp. tularensis (strain WY96-3418).